The chain runs to 263 residues: Proteasome subunit beta type-5 (263 aa).

The propeptide at 1 to 59 (MALASVLERPLSVNRRGFFGLGGRADLLDLGPGSPSDGLSLAAPSWGVPEEPRIEILHG) is removed in mature form. Threonine 60 functions as the Nucleophile in the catalytic mechanism. A bortezomib-binding site is contributed by alanine 108.

The protein belongs to the peptidase T1B family. In terms of assembly, the 26S proteasome consists of a 20S proteasome core and two 19S regulatory subunits. The 20S proteasome core is a barrel-shaped complex made of 28 subunits that are arranged in four stacked rings. The two outer rings are each formed by seven alpha subunits, and the two inner rings are formed by seven beta subunits. The proteolytic activity is exerted by three beta-subunits PSMB5, PSMB6 and PSMB7. Directly interacts with POMP. Interacts with ABCB1 and TAP1.

The protein resides in the cytoplasm. Its subcellular location is the nucleus. The enzyme catalyses Cleavage of peptide bonds with very broad specificity.. Functionally, component of the 20S core proteasome complex involved in the proteolytic degradation of most intracellular proteins. This complex plays numerous essential roles within the cell by associating with different regulatory particles. Associated with two 19S regulatory particles, forms the 26S proteasome and thus participates in the ATP-dependent degradation of ubiquitinated proteins. The 26S proteasome plays a key role in the maintenance of protein homeostasis by removing misfolded or damaged proteins that could impair cellular functions, and by removing proteins whose functions are no longer required. Associated with the PA200 or PA28, the 20S proteasome mediates ubiquitin-independent protein degradation. This type of proteolysis is required in several pathways including spermatogenesis (20S-PA200 complex) or generation of a subset of MHC class I-presented antigenic peptides (20S-PA28 complex). Within the 20S core complex, PSMB5 displays a chymotrypsin-like activity. The sequence is that of Proteasome subunit beta type-5 from Bos taurus (Bovine).